The chain runs to 316 residues: 4-hydroxy-3-methylbut-2-enyl diphosphate reductase (316 aa).

C12 is a [4Fe-4S] cluster binding site. The (2E)-4-hydroxy-3-methylbut-2-enyl diphosphate site is built by H41 and H74. Residues H41 and H74 each coordinate dimethylallyl diphosphate. 2 residues coordinate isopentenyl diphosphate: H41 and H74. A [4Fe-4S] cluster-binding site is contributed by C96. H124 provides a ligand contact to (2E)-4-hydroxy-3-methylbut-2-enyl diphosphate. Position 124 (H124) interacts with dimethylallyl diphosphate. An isopentenyl diphosphate-binding site is contributed by H124. The active-site Proton donor is E126. T167 contacts (2E)-4-hydroxy-3-methylbut-2-enyl diphosphate. C197 contacts [4Fe-4S] cluster. Positions 225, 226, 227, and 269 each coordinate (2E)-4-hydroxy-3-methylbut-2-enyl diphosphate. Residues S225, S226, N227, and S269 each coordinate dimethylallyl diphosphate. Positions 225, 226, 227, and 269 each coordinate isopentenyl diphosphate.

Belongs to the IspH family. In terms of assembly, homodimer. Requires [4Fe-4S] cluster as cofactor.

The catalysed reaction is isopentenyl diphosphate + 2 oxidized [2Fe-2S]-[ferredoxin] + H2O = (2E)-4-hydroxy-3-methylbut-2-enyl diphosphate + 2 reduced [2Fe-2S]-[ferredoxin] + 2 H(+). It catalyses the reaction dimethylallyl diphosphate + 2 oxidized [2Fe-2S]-[ferredoxin] + H2O = (2E)-4-hydroxy-3-methylbut-2-enyl diphosphate + 2 reduced [2Fe-2S]-[ferredoxin] + 2 H(+). It participates in isoprenoid biosynthesis; dimethylallyl diphosphate biosynthesis; dimethylallyl diphosphate from (2E)-4-hydroxy-3-methylbutenyl diphosphate: step 1/1. It functions in the pathway isoprenoid biosynthesis; isopentenyl diphosphate biosynthesis via DXP pathway; isopentenyl diphosphate from 1-deoxy-D-xylulose 5-phosphate: step 6/6. In terms of biological role, catalyzes the conversion of 1-hydroxy-2-methyl-2-(E)-butenyl 4-diphosphate (HMBPP) into a mixture of isopentenyl diphosphate (IPP) and dimethylallyl diphosphate (DMAPP). Acts in the terminal step of the DOXP/MEP pathway for isoprenoid precursor biosynthesis. This chain is 4-hydroxy-3-methylbut-2-enyl diphosphate reductase, found in Klebsiella pneumoniae (strain 342).